A 164-amino-acid chain; its full sequence is Phospholipase A and acyltransferase 4 (164 aa).

Positions 1-40 (MASPHQEPKPGDLIEIFRLGYEHWALYIGDGYVIHLAPPS) are essential for its ability regulate keratinocyte differentiation. Over 1–134 (MASPHQEPKP…SRCKQVEKAK (134 aa)) the chain is Cytoplasmic. In terms of domain architecture, LRAT spans 13-129 (LIEIFRLGYE…LRYGKSRCKQ (117 aa)). Catalysis depends on residues histidine 23 and histidine 35. Cysteine 113 acts as the Acyl-thioester intermediate in catalysis. Residues 124 to 164 (KSRCKQVEKAKVEVGVATALGILVVAGCSFAIRRYQKKATA) form an interaction with TGM1 region. A helical membrane pass occupies residues 135–155 (VEVGVATALGILVVAGCSFAI). Residues 156-164 (RRYQKKATA) lie on the Lumenal side of the membrane.

It belongs to the H-rev107 family. As to quaternary structure, interacts with TGM1. In terms of tissue distribution, widely expressed.

It is found in the membrane. It carries out the reaction a 1,2-diacyl-sn-glycero-3-phosphocholine + H2O = a 1-acyl-sn-glycero-3-phosphocholine + a fatty acid + H(+). It catalyses the reaction a 1,2-diacyl-sn-glycero-3-phosphocholine + H2O = a 2-acyl-sn-glycero-3-phosphocholine + a fatty acid + H(+). The catalysed reaction is 1,2-dihexadecanoyl-sn-glycero-3-phosphocholine + H2O = 1-hexadecanoyl-sn-glycero-3-phosphocholine + hexadecanoate + H(+). The enzyme catalyses 1,2-dihexadecanoyl-sn-glycero-3-phosphocholine + H2O = 2-hexadecanoyl-sn-glycero-3-phosphocholine + hexadecanoate + H(+). It carries out the reaction 1-hexadecanoyl-2-(9Z-octadecenoyl)-sn-glycero-3-phosphocholine + H2O = 2-(9Z-octadecenoyl)-sn-glycero-3-phosphocholine + hexadecanoate + H(+). It catalyses the reaction 1-hexadecanoyl-2-(9Z-octadecenoyl)-sn-glycero-3-phosphocholine + H2O = 1-hexadecanoyl-sn-glycero-3-phosphocholine + (9Z)-octadecenoate + H(+). The catalysed reaction is 1-hexadecanoyl-2-(5Z,8Z,11Z,14Z-eicosatetraenoyl)-sn-glycero-3-phosphocholine + H2O = 2-(5Z,8Z,11Z,14Z)-eicosatetraenoyl-sn-glycero-3-phosphocholine + hexadecanoate + H(+). The enzyme catalyses 1-hexadecanoyl-2-(9Z,12Z-octadecadienoyl)-sn-glycero-3-phosphoethanolamine + H2O = 1-hexadecanoyl-sn-glycero-3-phosphoethanolamine + (9Z,12Z)-octadecadienoate + H(+). It carries out the reaction 1-hexadecanoyl-2-(9Z,12Z-octadecadienoyl)-sn-glycero-3-phosphoethanolamine + H2O = 2-(9Z,12Z)-octadecadienoyl-sn-glycero-3-phosphoethanolamine + hexadecanoate + H(+). It catalyses the reaction 1-hexadecanoyl-2-(5Z,8Z,11Z,14Z-eicosatetraenoyl)-sn-glycero-3-phosphoethanolamine + H2O = 2-(5Z,8Z,11Z,14Z)-eicosatetraenoyl-sn-glycero-3-phosphoethanolamine + hexadecanoate + H(+). The catalysed reaction is 1-hexanoyl-2-acyl-sn-glycero-3-phosphocholine + H2O = hexanoate + a 2-acyl-sn-glycero-3-phosphocholine + H(+). The enzyme catalyses 1,2-diheptadecanoyl-sn-glycero-3-phosphoethanolamine + 1-(9Z-octadecenoyl)-2-hexadecanoyl-sn-glycero-3-phosphocholine = 1,2-diheptadecanoyl-sn-glycero-3-phospho-N-hexadecanoyl-ethanolamine + 1-(9Z-octadecenoyl)-sn-glycero-3-phosphocholine + H(+). It carries out the reaction 1,2-diheptadecanoyl-sn-glycero-3-phosphoethanolamine + 1-(9Z-octadecenoyl)-2-hexadecanoyl-sn-glycero-3-phosphocholine = 1,2-diheptadecanoyl-sn-glycero-3-phospho-N-(9Z-octadecenoyl)-ethanolamine + 2-hexadecanoyl-sn-glycero-3-phosphocholine + H(+). Exhibits both phospholipase A1/2 and acyltransferase activities. Shows phospholipase A1 (PLA1) and A2 (PLA2), catalyzing the calcium-independent release of fatty acids from the sn-1 or sn-2 position of glycerophospholipids. For most substrates, PLA1 activity is much higher than PLA2 activity. Shows O-acyltransferase activity, catalyzing the transfer of a fatty acyl group from glycerophospholipid to the hydroxyl group of lysophospholipid. Shows N-acyltransferase activity, catalyzing the calcium-independent transfer of a fatty acyl group at the sn-1 position of phosphatidylcholine (PC) and other glycerophospholipids to the primary amine of phosphatidylethanolamine (PE), forming N-acylphosphatidylethanolamine (NAPE), which serves as precursor for N-acylethanolamines (NAEs). Promotes keratinocyte differentiation via activation of TGM1. In Homo sapiens (Human), this protein is Phospholipase A and acyltransferase 4.